The sequence spans 317 residues: MKNGRGNRVAVVGTGFVGASYAFALMNQGIADEIVLIDANENKAEGDAMDLNHGKVFAPKPADIWHGDYDDCRDADLVVICAGANQKPGETRLDLVDKNIAIFRSIVESVMASGFQGLFLVATNPVDILTYATWKFSSLPQERVIGSGTILDTARFRFLLGDYFAVAPTNVHAYIIGEHGDTELPVWSQADIGGVPIRKLVESKGEEAQKELERIFVNVRDAAYQIIEKKGATYYGIAMGLARVTRAILHHENAILTVSAYLDGPYGERDVYIGVPAVINRNGIREVIEIELDEEEKKWFHRSAATLKGVLARYFAQ.

Residues Val-17, Asp-38, Lys-43, Tyr-69, and 83-84 contribute to the NAD(+) site; that span reads GA. Residues Gln-86 and Arg-92 each coordinate substrate. Residues Ser-105, 122–124, and Ser-147 contribute to the NAD(+) site; that span reads ATN. 124–127 provides a ligand contact to substrate; it reads NPVD. 152 to 155 contributes to the substrate binding site; sequence DTAR. Arg-157 and His-172 together coordinate beta-D-fructose 1,6-bisphosphate. His-179 (proton acceptor) is an active-site residue. Tyr-224 is subject to Phosphotyrosine. Residue Thr-233 participates in substrate binding.

This sequence belongs to the LDH/MDH superfamily. LDH family. Homotetramer.

It is found in the cytoplasm. It carries out the reaction (S)-lactate + NAD(+) = pyruvate + NADH + H(+). It participates in fermentation; pyruvate fermentation to lactate; (S)-lactate from pyruvate: step 1/1. Allosterically activated by fructose 1,6-bisphosphate (FBP). Functionally, catalyzes the conversion of lactate to pyruvate. In Bacillus caldotenax, this protein is L-lactate dehydrogenase.